A 257-amino-acid polypeptide reads, in one-letter code: MEIKRLPALSDNYIFLLHDANNNTAAVVDPAVAEPVLNCLDQLGAKLIAIFNTHHHADHVGGNKKLMEQFPDLCVYGSKEDQGRIPGQQVFLEEGDTVEFAGKTGKVYFVPGHTRGHIAYYFPPNENEEIGDLFCGDTIFAGGCGRLFEGTPAQMVESIGKLRNLPDHTRIWCAHEYTLNNLKFAVTVDKDNSDLQIRYQDVIKARKNEEATVPSLLGEEKKTNPFLRWDQPALQMITGMNDPARVFGKIRGMKDNF.

Residues His-54, His-56, Asp-58, His-59, His-113, Asp-137, and His-175 each coordinate Zn(2+).

It belongs to the metallo-beta-lactamase superfamily. Glyoxalase II family. Monomer. Requires Zn(2+) as cofactor.

The catalysed reaction is an S-(2-hydroxyacyl)glutathione + H2O = a 2-hydroxy carboxylate + glutathione + H(+). It participates in secondary metabolite metabolism; methylglyoxal degradation; (R)-lactate from methylglyoxal: step 2/2. Its function is as follows. Thiolesterase that catalyzes the hydrolysis of S-D-lactoyl-glutathione to form glutathione and D-lactic acid. The sequence is that of Hydroxyacylglutathione hydrolase from Crocosphaera subtropica (strain ATCC 51142 / BH68) (Cyanothece sp. (strain ATCC 51142)).